Here is a 98-residue protein sequence, read N- to C-terminus: MSMVYINIFLAFILSFMGLLIYRSHLMSSLLCLEGMMLSLFIMMTVTILTNHLTLASMTPIILLVFAACEAALGLSLLVMISNTYGTDYVQNLNLLQC.

The next 3 membrane-spanning stretches (helical) occupy residues 1-21 (MSMVYINIFLAFILSFMGLLI), 30-50 (LLCLEGMMLSLFIMMTVTILT), and 61-81 (IILLVFAACEAALGLSLLVMI).

This sequence belongs to the complex I subunit 4L family. Core subunit of respiratory chain NADH dehydrogenase (Complex I) which is composed of 45 different subunits.

The protein resides in the mitochondrion inner membrane. The enzyme catalyses a ubiquinone + NADH + 5 H(+)(in) = a ubiquinol + NAD(+) + 4 H(+)(out). Functionally, core subunit of the mitochondrial membrane respiratory chain NADH dehydrogenase (Complex I) which catalyzes electron transfer from NADH through the respiratory chain, using ubiquinone as an electron acceptor. Part of the enzyme membrane arm which is embedded in the lipid bilayer and involved in proton translocation. This is NADH-ubiquinone oxidoreductase chain 4L (MT-ND4L) from Martes americana (American marten).